The primary structure comprises 243 residues: Transmembrane protein 174 (243 aa).

Transmembrane regions (helical) follow at residues Leu-40–Ile-60 and Leu-73–Phe-93. The disordered stretch occupies residues Ala-205–Cys-229.

As to quaternary structure, interacts with SLC34A1; regulates SLC34A1 internalization by PTH and FGF23.

Its subcellular location is the endoplasmic reticulum membrane. It localises to the apical cell membrane. Functionally, regulator of plasma phosphate homeostasis. Decreases serum inorganic phosphate (Pi) uptake by regulating the sodium-phosphate cotransporter SLC34A1 trafficking by PTH and FGF23 in the kidney. The chain is Transmembrane protein 174 (Tmem174) from Rattus norvegicus (Rat).